The primary structure comprises 387 residues: Protein REVEILLE 1 (387 aa).

2 stretches are compositionally biased toward polar residues: residues 1 to 17 (MASSPLTANVQGTNASL) and 27 to 37 (KQIQFNDQSFG). Positions 1–44 (MASSPLTANVQGTNASLRNRDEETADKQIQFNDQSFGGNDYAPK) are disordered. Residues 50-104 (TITKERERWTDEEHKKFVEALKLYGRAWRRIEEHVGSKTAVQIRSHAQKFFSKVA) enclose the HTH myb-type domain. The H-T-H motif DNA-binding region spans 77 to 100 (WRRIEEHVGSKTAVQIRSHAQKFF). Disordered stretches follow at residues 105-200 (REAT…TANA), 306-334 (KAVQNEGSSTGSNTGSVDDTGHTEKTTEP), and 350-387 (AFSELRRTNSESNSRGFGPYKKRKMVTEEEEHEIHLHL). The span at 124–134 (RPKRKPAHPYP) shows a compositional bias: basic residues. Polar residues predominate over residues 141 to 166 (ADQTSRSVSPSERDTQSPTSVLSTVG). Composition is skewed to low complexity over residues 172-200 (SLDSSSPNRSLSPVSSASPPAALTTTANA) and 312-323 (GSSTGSNTGSVD). Basic and acidic residues predominate over residues 324–333 (DTGHTEKTTE).

Its subcellular location is the nucleus. Functionally, morning-phased transcription factor integrating the circadian clock and auxin pathways. Binds to the evening element (EE) of promoters. Does not act within the central clock, but regulates free auxin levels in a time-of-day specific manner. Positively regulates the expression of YUC8 during the day, but has no effect during the night. Negative regulator of freezing tolerance. This chain is Protein REVEILLE 1 (RVE1), found in Arabidopsis thaliana (Mouse-ear cress).